A 2171-amino-acid polypeptide reads, in one-letter code: Mediator of DNA damage checkpoint protein 1 (2171 aa).

Positions 1-19 (MEDTQAIDWDVEEEEETEQ) are enriched in acidic residues. The interval 1–22 (MEDTQAIDWDVEEEEETEQSSE) is disordered. The segment at 1–150 (MEDTQAIDWD…SRGPLTVEET (150 aa)) is interaction with CHEK2. Residues 2–220 (EDTQAIDWDV…PFAFNLNSDT (219 aa)) form an interaction with the MRN complex region. T4 is subject to Phosphothreonine. Positions 54–105 (NVVGRMPDCSVALPFPSISKQHAEIEILAWDKAPILRDCGSLNGTQILRPPK) constitute an FHA domain. Position 108 is a phosphoserine (S108). Residues 145-568 (LTVEETPRVQ…PAKLLVVSLE (424 aa)) are required for nuclear localization (NLS1). Position 146 is a phosphothreonine (T146). A phosphoserine mark is found at S168, S176, S196, and S218. Disordered stretches follow at residues 185 to 248 (RTTS…AKQS) and 261 to 317 (DQPL…AEVH). T220 bears the Phosphothreonine mark. Basic and acidic residues predominate over residues 261–278 (DQPLVKERDDDTKVKRGA). S299 carries the post-translational modification Phosphoserine. A Phosphothreonine modification is found at T301. A compositionally biased stretch (basic and acidic residues) spans 306–317 (DSRPPGRPAEVH). A Phosphoserine modification is found at S329. The residue at position 331 (T331) is a Phosphothreonine. The interval 355–387 (GVGTRGPGAPGLAHLQESQAGSDTDVEEGKAPQ) is disordered. Phosphoserine is present on residues S372 and S376. Residue T378 is modified to Phosphothreonine. Phosphoserine occurs at positions 394, 397, and 402. Phosphothreonine is present on T404. S411 is subject to Phosphoserine. Disordered regions lie at residues 443–469 (QRSQTTTERDSDTDVEEEELPVENREA) and 481–522 (VRAH…VDIN). Position 449 is a phosphothreonine (T449). Phosphoserine is present on S453. T455 bears the Phosphothreonine mark. S485, S495, S498, S504, S505, and S513 each carry phosphoserine. Positions 513 to 522 (SQASTTVDIN) are enriched in polar residues. T523 is subject to Phosphothreonine. S590 carries the phosphoserine modification. K616 participates in a covalent cross-link: Glycyl lysine isopeptide (Lys-Gly) (interchain with G-Cter in SUMO1); alternate. K616 is covalently cross-linked (Glycyl lysine isopeptide (Lys-Gly) (interchain with G-Cter in SUMO2); alternate). Disordered regions lie at residues 653-689 (DTLGESTQPQREGAQVPTGREREQHVGGTKDSEDNYG) and 780-1969 (SPPR…TKLN). Residues 671-685 (GREREQHVGGTKDSE) are compositionally biased toward basic and acidic residues. Phosphoserine occurs at positions 780 and 793. An N6-acetyllysine modification is found at K812. 4 stretches are compositionally biased toward basic and acidic residues: residues 819-844 (ETAERVGPERGPLERETEKLLPERQT), 851-862 (ELTKGKQDREQK), 868-905 (DTQRQESDKNGESASPERDRESLKVEIETSEEIQEKQV), and 914-951 (AFEREVERPVANRECDPAELEEKVPKVILERDTQRGEP). Phosphoserine occurs at positions 955 and 998. Residues 955–964 (SQDQKGQASS) show a composition bias toward polar residues. The span at 1016–1031 (KASRIRAAEKVSRGDQ) shows a compositional bias: basic and acidic residues. Position 1033 is a phosphoserine (S1033). The span at 1040-1051 (PTVPEAPAPPQK) shows a compositional bias: pro residues. Phosphoserine is present on residues S1068 and S1086. Residues 1103–1113 (PKPKIRTRKSS) show a composition bias toward basic residues. Composition is skewed to polar residues over residues 1129-1157 (PSTSTAQPVTPKPTSQATRSRTNRSSVKT) and 1170-1187 (PCTSTDQPVTSEPTSQVT). Residues 1148 to 1692 (SRTNRSSVKT…TNRSSVKTPE (545 aa)) form an interaction with the PRKDC complex region. Position 1157 is a phosphothreonine (T1157). Residue T1198 is modified to Phosphothreonine. Residues 1210–1227 (QPSTSTDRPVTSEPTSHA) are compositionally biased toward polar residues. S1235 bears the Phosphoserine mark. At T1239 the chain carries Phosphothreonine. Positions 1251–1268 (QPSTSTDQPVTSEPTYQA) are enriched in polar residues. Residues T1280 and T1302 each carry the phosphothreonine modification. Positions 1306-1318 (TSRTTRSRTNMSS) are enriched in low complexity. Composition is skewed to polar residues over residues 1334 to 1350 (PSTSTEQPVTPEPTSRA) and 1375 to 1403 (PSTSTDQPVTPEPTSQATRGRTNRSSVKT). Low complexity predominate over residues 1429–1441 (TSRTTRSRTNMSS). Residues 1457–1473 (PSTSTEQPVTPEPTSRA) are compositionally biased toward polar residues. S1481 and S1482 each carry phosphoserine. At K1484 the chain carries N6-acetyllysine. A Phosphothreonine modification is found at T1485. Residue K1495 forms a Glycyl lysine isopeptide (Lys-Gly) (interchain with G-Cter in SUMO1); alternate linkage. A Glycyl lysine isopeptide (Lys-Gly) (interchain with G-Cter in SUMO2); alternate cross-link involves residue K1495. 3 stretches are compositionally biased toward polar residues: residues 1498–1526 (PSTSTDQPVTPEPTSQATRGRTNRSSVKT), 1538–1557 (QPSTSTDQPVTPEPTSQVTR), and 1580–1596 (ASASTDQPVTSEPTSRT). Residues T1507 and T1548 each carry the phosphothreonine modification. Phosphothreonine is present on residues T1615 and T1630. 2 stretches are compositionally biased toward polar residues: residues 1620 to 1649 (QPSTSTDQPVTPEPTSQATRGRTNRSSVKT) and 1661 to 1678 (QPSTSRNQLVTPEPTSRA). S1646 is modified (phosphoserine). Residues T1649 and T1671 each carry the phosphothreonine modification. S1686 bears the Phosphoserine mark. A Phosphothreonine modification is found at T1690. Over residues 1693-1702 (PVVPTAPEPH) the composition is skewed to pro residues. Residues 1706–1718 (STDQPVTPKLTSR) are compositionally biased toward polar residues. A phosphothreonine mark is found at T1712, T1746, and T1753. The segment covering 1760-1771 (GGQSKTLRSSTV) has biased composition (polar residues). S1763 is subject to Phosphoserine. T1779 bears the Phosphothreonine mark. The span at 1780–1801 (PEFQSPVTTDQPISPEPITQPS) shows a compositional bias: polar residues. Residues 1780 to 2171 (PEFQSPVTTD…VLSPLEMSST (392 aa)) form a required for nuclear localization (NLS2) region. Residues S1784 and S1793 each carry the phosphoserine modification. A Glycyl lysine isopeptide (Lys-Gly) (interchain with G-Cter in SUMO2) cross-link involves residue K1822. The residue at position 1857 (S1857) is a Phosphoserine. Residue K1872 forms a Glycyl lysine isopeptide (Lys-Gly) (interchain with G-Cter in SUMO2) linkage. The residue at position 1882 (T1882) is a Phosphothreonine. S1902 carries the phosphoserine modification. Over residues 1905–1918 (HQKQPQRGEVSQKT) the composition is skewed to polar residues. Residue K1922 forms a Glycyl lysine isopeptide (Lys-Gly) (interchain with G-Cter in SUMO1); alternate linkage. A Glycyl lysine isopeptide (Lys-Gly) (interchain with G-Cter in SUMO2); alternate cross-link involves residue K1922. The segment covering 1929 to 1939 (AEKPGKEEDVV) has biased composition (basic and acidic residues). T1940 bears the Phosphothreonine mark. BRCT domains lie at 1974 to 2052 (APKV…EYVV) and 2073 to 2164 (RERR…FVLS). R2025 carries the omega-N-methylarginine modification.

In terms of assembly, homodimer. Interacts with H2AX, which requires phosphorylation of H2AX on 'Ser-139'. Interacts with the MRN complex, composed of MRE11, RAD50, and NBN. Interacts with CHEK2, which requires ATM-mediated phosphorylation of 'Thr-68' within the FHA domain of CHEK2. Interacts constitutively with the BRCA1-BARD1 complex, SMC1A and TP53BP1. Interacts with ATM and FANCD2, and these interactions are reduced upon DNA damage. Also interacts with the PRKDC complex, composed of XRCC6/KU70, XRCC5/KU80 and PRKDC/XRCC7. This interaction may be required for PRKDC autophosphorylation, which is essential for DNA double strand break (DSB) repair. When phosphorylated by ATM, interacts with RNF8 (via FHA domain). Interacts with CEP164. When phosphorylated, interacts with APTX (via FHA-like domain). Interacts (when phosphorylated) with TOPBP1; promoting TOPBP1 localization to DNA damage sites during mitosis. Interacts (when phosphorylated) with NBN; promoting NBN and MRN complex localization to DNA damage sites. Post-translationally, phosphorylated upon exposure to ionizing radiation (IR), ultraviolet radiation (UV), and hydroxyurea (HU). Phosphorylation in response to IR requires ATM, NBN, and possibly CHEK2. Also phosphorylated during the G2/M phase of the cell cycle and during activation of the mitotic spindle checkpoint. Phosphorylation at Thr-4 by ATM stabilizes and enhances homodimerization via the FHA domain. Phosphorylated at Ser-168 and Ser-196 by CK2 in response to DNA damage during mitosis, promoting interaction with TOPBP1. Phosphorylated by CK2 in response to DNA damage, promoting interaction with NBN and recruitment of the MRN complex to DNA damage sites. In terms of processing, sumoylation at Lys-1922 by PIAS4 following DNA damage promotes ubiquitin-mediated degradation. Ubiquitinated by RNF4, leading to proteasomal degradation; undergoes 'Lys-48'-linked polyubiquitination.

It is found in the nucleus. It localises to the chromosome. Histone reader protein required for checkpoint-mediated cell cycle arrest in response to DNA damage within both the S phase and G2/M phases of the cell cycle. Specifically recognizes and binds histone H2AX phosphorylated at 'Ser-139', a marker of DNA damage, serving as a scaffold for the recruitment of DNA repair and signal transduction proteins to discrete foci of DNA damage sites. Also required for downstream events subsequent to the recruitment of these proteins. These include phosphorylation and activation of the ATM, CHEK1 and CHEK2 kinases, and stabilization of TP53/p53 and apoptosis. ATM and CHEK2 may also be activated independently by a parallel pathway mediated by TP53BP1. Required for chromosomal stability during mitosis by promoting recruitment of TOPBP1 to DNA double strand breaks (DSBs): TOPBP1 forms filamentous assemblies that bridge MDC1 and tether broken chromosomes during mitosis. Required for the repair of DSBs via homologous recombination by promoting recruitment of NBN component of the MRN complex to DSBs. The chain is Mediator of DNA damage checkpoint protein 1 (MDC1) from Pan troglodytes (Chimpanzee).